Consider the following 65-residue polypeptide: DNA-directed RNA polymerase subunit Rpo10 (65 aa).

Zn(2+) is bound by residues cysteine 7, cysteine 10, cysteine 44, and cysteine 45.

This sequence belongs to the archaeal Rpo10/eukaryotic RPB10 RNA polymerase subunit family. Part of the RNA polymerase complex. Requires Zn(2+) as cofactor.

Its subcellular location is the cytoplasm. The catalysed reaction is RNA(n) + a ribonucleoside 5'-triphosphate = RNA(n+1) + diphosphate. DNA-dependent RNA polymerase (RNAP) catalyzes the transcription of DNA into RNA using the four ribonucleoside triphosphates as substrates. In Pyrococcus furiosus (strain ATCC 43587 / DSM 3638 / JCM 8422 / Vc1), this protein is DNA-directed RNA polymerase subunit Rpo10.